A 124-amino-acid polypeptide reads, in one-letter code: Alpha-amylase inhibitor 0.53 (124 aa).

Cystine bridges form between Cys20-Cys41, Cys28-Cys83, Cys42-Cys99, and Cys54-Cys115.

It belongs to the protease inhibitor I6 (cereal trypsin/alpha-amylase inhibitor) family. As to quaternary structure, homodimer. The disulfide bonds are essential for the inhibitor activity. Endosperm.

It is found in the secreted. Functionally, alpha-amylase inhibitor. The chain is Alpha-amylase inhibitor 0.53 from Triticum aestivum (Wheat).